Here is a 344-residue protein sequence, read N- to C-terminus: N-acetyl-gamma-glutamyl-phosphate reductase (344 aa).

Cysteine 148 is an active-site residue.

The protein belongs to the NAGSA dehydrogenase family. Type 1 subfamily.

The protein resides in the cytoplasm. It carries out the reaction N-acetyl-L-glutamate 5-semialdehyde + phosphate + NADP(+) = N-acetyl-L-glutamyl 5-phosphate + NADPH + H(+). The protein operates within amino-acid biosynthesis; L-arginine biosynthesis; N(2)-acetyl-L-ornithine from L-glutamate: step 3/4. Its function is as follows. Catalyzes the NADPH-dependent reduction of N-acetyl-5-glutamyl phosphate to yield N-acetyl-L-glutamate 5-semialdehyde. This Clostridium beijerinckii (strain ATCC 51743 / NCIMB 8052) (Clostridium acetobutylicum) protein is N-acetyl-gamma-glutamyl-phosphate reductase.